The following is a 138-amino-acid chain: Succinate dehydrogenase assembly factor 4, mitochondrial (138 aa).

Residues Met1–Lys32 constitute a mitochondrion transit peptide. The span at Gln71–Phe98 shows a compositional bias: polar residues. The segment at Gln71–Phe138 is disordered.

It belongs to the SDHAF4 family. Interacts with SDH1 in its FAD-bound form.

It is found in the mitochondrion matrix. In terms of biological role, plays an essential role in the assembly of succinate dehydrogenase (SDH), an enzyme complex (also referred to as respiratory complex II) that is a component of both the tricarboxylic acid (TCA) cycle and the mitochondrial electron transport chain, and which couples the oxidation of succinate to fumarate with the reduction of ubiquinone (coenzyme Q) to ubiquinol. Binds to the flavoprotein subunit SDH1 in its FAD-bound form, blocking the generation of excess reactive oxygen species (ROS) and facilitating its assembly with the iron-sulfur protein subunit SDH2 into the SDH catalytic dimer. The polypeptide is Succinate dehydrogenase assembly factor 4, mitochondrial (Saccharomyces cerevisiae (strain ATCC 204508 / S288c) (Baker's yeast)).